Here is a 476-residue protein sequence, read N- to C-terminus: Aspartyl/glutamyl-tRNA(Asn/Gln) amidotransferase subunit B (476 aa).

The protein belongs to the GatB/GatE family. GatB subfamily. In terms of assembly, heterotrimer of A, B and C subunits.

It catalyses the reaction L-glutamyl-tRNA(Gln) + L-glutamine + ATP + H2O = L-glutaminyl-tRNA(Gln) + L-glutamate + ADP + phosphate + H(+). The catalysed reaction is L-aspartyl-tRNA(Asn) + L-glutamine + ATP + H2O = L-asparaginyl-tRNA(Asn) + L-glutamate + ADP + phosphate + 2 H(+). Its function is as follows. Allows the formation of correctly charged Asn-tRNA(Asn) or Gln-tRNA(Gln) through the transamidation of misacylated Asp-tRNA(Asn) or Glu-tRNA(Gln) in organisms which lack either or both of asparaginyl-tRNA or glutaminyl-tRNA synthetases. The reaction takes place in the presence of glutamine and ATP through an activated phospho-Asp-tRNA(Asn) or phospho-Glu-tRNA(Gln). The polypeptide is Aspartyl/glutamyl-tRNA(Asn/Gln) amidotransferase subunit B (Nitratidesulfovibrio vulgaris (strain ATCC 29579 / DSM 644 / CCUG 34227 / NCIMB 8303 / VKM B-1760 / Hildenborough) (Desulfovibrio vulgaris)).